Here is a 395-residue protein sequence, read N- to C-terminus: Probable protein arginine N-methyltransferase 6.2 (395 aa).

The span at 1-11 (MFAGGADGGNG) shows a compositional bias: gly residues. Residues 1–37 (MFAGGADGGNGHLPRPRRARRGGGGGGGMGSPPLGPP) form a disordered region. The region spanning 45–390 (DMAYFKAYSH…YFTRDQWYVK (346 aa)) is the SAM-dependent MTase PRMT-type domain. The S-adenosyl-L-methionine site is built by histidine 58, arginine 67, glycine 91, aspartate 113, and glutamate 142. Catalysis depends on residues glutamate 156 and glutamate 165. The segment at 300 to 324 (KKQANQCLDGNTQDASPSNKKKKAD) is disordered. Positions 302–317 (QANQCLDGNTQDASPS) are enriched in polar residues.

It belongs to the class I-like SAM-binding methyltransferase superfamily. Protein arginine N-methyltransferase family. PRMT6 subfamily.

Its function is as follows. Arginine methyltransferase that can both catalyze the formation of omega-N monomethylarginine (MMA) and asymmetrical dimethylarginine (aDMA). The chain is Probable protein arginine N-methyltransferase 6.2 (PRMT6.2) from Oryza sativa subsp. indica (Rice).